A 435-amino-acid chain; its full sequence is MCDMIESQPAQKIGKMKKLRRTLSDSFSRIALKKDENAIDEICVTKMSTRNCQGIDSVIKHLDPIPEDKKVRVQRTQSSFDPFEKTSNQPTSPKFGKADSYEKLEKLGEGSYATVFKGKSKVNGKLVALKVIRLQEEEGTPFTAIREASLLKGLKHANIVLLHDIIHTKETLTLVFEYVHTDLCQYMDKHPGGLNPENVKLFLFQLLRGLSYIHQGHILHRDLKPQNLLISDTGELKLADFGLARAKSVPSHTYSNEVVTLWYRPPDVLLGSTDYSTCLDMWGVGCIFVEMIQGVAAFPGMKDIQDQLERIFLILGTPIEETWPAVHSLPHFEPERFTLYGPKNLRQAWNKLSYVNHAEDLASKLLQCFPKNRLSAQAALNHDYFSDLPPRLWELSDMSSIFTVPNVKLQPEAGESMRVFGKNNSFSKSLSNSKH.

Polar residues predominate over residues 75 to 92; that stretch reads RTQSSFDPFEKTSNQPTS. Residues 75–97 are disordered; sequence RTQSSFDPFEKTSNQPTSPKFGK. The Protein kinase domain occupies 101–385; the sequence is YEKLEKLGEG…AQAALNHDYF (285 aa). ATP contacts are provided by residues 107–115 and K130; that span reads LGEGSYATV. The active-site Proton acceptor is D222.

It belongs to the protein kinase superfamily. CMGC Ser/Thr protein kinase family. CDC2/CDKX subfamily. Interacts with ccny; ccny mediates its recruitment to the plasma membrane and promotes phosphorylation of lrp6.

The protein localises to the cell membrane. It catalyses the reaction L-seryl-[protein] + ATP = O-phospho-L-seryl-[protein] + ADP + H(+). The enzyme catalyses L-threonyl-[protein] + ATP = O-phospho-L-threonyl-[protein] + ADP + H(+). Serine/threonine-protein kinase involved in the control of the eukaryotic cell cycle, whose activity is controlled by an associated cyclin. Acts as a cell-cycle regulator of Wnt signaling pathway during G2/M phase by mediating the phosphorylation of lrp6, leading to the activation of the Wnt signaling pathway. The protein is Cyclin-dependent kinase 14 (cdk14) of Xenopus laevis (African clawed frog).